The chain runs to 489 residues: Glycogen synthase (489 aa).

R20 serves as a coordination point for ADP-alpha-D-glucose.

Belongs to the glycosyltransferase 1 family. Bacterial/plant glycogen synthase subfamily.

The enzyme catalyses [(1-&gt;4)-alpha-D-glucosyl](n) + ADP-alpha-D-glucose = [(1-&gt;4)-alpha-D-glucosyl](n+1) + ADP + H(+). The protein operates within glycan biosynthesis; glycogen biosynthesis. Synthesizes alpha-1,4-glucan chains using ADP-glucose. The chain is Glycogen synthase from Chlorobium phaeobacteroides (strain DSM 266 / SMG 266 / 2430).